The following is a 299-amino-acid chain: Lipoyl synthase (299 aa).

[4Fe-4S] cluster contacts are provided by C45, C50, C56, C71, C75, C78, and S284. The 217-residue stretch at 57–273 (YSKGTATFMI…GDVALAKDFL (217 aa)) folds into the Radical SAM core domain.

It belongs to the radical SAM superfamily. Lipoyl synthase family. [4Fe-4S] cluster is required as a cofactor.

It is found in the cytoplasm. It catalyses the reaction [[Fe-S] cluster scaffold protein carrying a second [4Fe-4S](2+) cluster] + N(6)-octanoyl-L-lysyl-[protein] + 2 oxidized [2Fe-2S]-[ferredoxin] + 2 S-adenosyl-L-methionine + 4 H(+) = [[Fe-S] cluster scaffold protein] + N(6)-[(R)-dihydrolipoyl]-L-lysyl-[protein] + 4 Fe(3+) + 2 hydrogen sulfide + 2 5'-deoxyadenosine + 2 L-methionine + 2 reduced [2Fe-2S]-[ferredoxin]. It participates in protein modification; protein lipoylation via endogenous pathway; protein N(6)-(lipoyl)lysine from octanoyl-[acyl-carrier-protein]: step 2/2. In terms of biological role, catalyzes the radical-mediated insertion of two sulfur atoms into the C-6 and C-8 positions of the octanoyl moiety bound to the lipoyl domains of lipoate-dependent enzymes, thereby converting the octanoylated domains into lipoylated derivatives. In Desulfotalea psychrophila (strain LSv54 / DSM 12343), this protein is Lipoyl synthase.